Reading from the N-terminus, the 363-residue chain is Homeobox protein DTH-2 (363 aa).

A DNA-binding region (homeobox) is located at residues 133–192; sequence RRKRRILFSQAQIYELERRFKQQKYLSAPEREHLANLINLTPTQVKIWFQNHRYKCKRSQ. The segment at 189–246 is disordered; it reads KRSQKDKEKEQQKEKSYHLKKNIVDDKERSPNKQICNASSSDRSTPEEPVAKAKESGL. The segment covering 191–219 has biased composition (basic and acidic residues); it reads SQKDKEKEQQKEKSYHLKKNIVDDKERSP. The span at 220-231 shows a compositional bias: polar residues; it reads NKQICNASSSDR. Residues 232–246 are compositionally biased toward basic and acidic residues; it reads STPEEPVAKAKESGL.

The protein belongs to the NK-2 homeobox family. As to expression, intestine and unidentified peripheral parenchymal cells. Slightly higher levels in the cephalic region compared to other body regions.

The protein localises to the nucleus. Its function is as follows. This protein might be involved in determination and/or differentiation of nerve cells in the continuous replacement of neurons in the cephalic region. The protein is Homeobox protein DTH-2 (DTH-2) of Girardia tigrina (Planarian).